Consider the following 57-residue polypeptide: Conotoxin reg3.17 (57 aa).

Residues 1–16 (TICLLLFPLTVVPLDG) form the signal peptide. Positions 17–44 (DQPAHQPAVRKHNIKSAVQLRQWDEEQQ) are excised as a propeptide. 3 disulfide bridges follow: cysteine 45–cysteine 57, cysteine 46–cysteine 53, and cysteine 50–cysteine 56.

The protein belongs to the conotoxin M superfamily. As to expression, expressed by the venom duct.

The protein resides in the secreted. The protein is Conotoxin reg3.17 of Conus regius (Crown cone).